Reading from the N-terminus, the 259-residue chain is L-cysteine S-thiosulfotransferase subunit SoxA (259 aa).

The signal sequence occupies residues 1–23 (MRKLWFLPILLGAVGGVSLYAIA). In terms of domain architecture, Cytochrome c spans 50–135 (VYAEQGRDMF…SIATYVATLS (86 aa)). The heme c site is built by C70, C73, H74, C108, C171, C174, and H175. R216 contributes to the substrate binding site. C220 serves as a coordination point for heme c. C220 serves as the catalytic Cysteine persulfide intermediate.

Belongs to the SoxA family. In terms of assembly, heterodimer of SoxA and SoxX. Requires heme c as cofactor. In terms of processing, cysteine persulfide at Cys-220.

The protein resides in the periplasm. The enzyme catalyses L-cysteinyl-[SoxY protein] + thiosulfate + 2 Fe(III)-[cytochrome c] = S-sulfosulfanyl-L-cysteinyl-[SoxY protein] + 2 Fe(II)-[cytochrome c] + 2 H(+). The catalysed reaction is S-sulfanyl-L-cysteinyl-[SoxY protein] + thiosulfate + 2 Fe(III)-[cytochrome c] = S-(2-sulfodisulfanyl)-L-cysteinyl-[SoxY protein] + 2 Fe(II)-[cytochrome c] + 2 H(+). Its function is as follows. C-type diheme cytochrome, which is part of the SoxAX cytochrome complex involved in sulfur oxidation. The SoxAX complex catalyzes the formation of a heterodisulfide bond between the conserved cysteine residue on a sulfur carrier SoxYZ complex subunit SoxY and thiosulfate or other inorganic sulfur substrates. This leads to the liberation of two electrons, which may be transferred from the SoxAX complex to another cytochrome c that then channels them into the respiratory electron transport chain. Some electrons may be used for reductive CO(2) fixation. The sequence is that of L-cysteine S-thiosulfotransferase subunit SoxA from Hydrogenobacter thermophilus (strain DSM 6534 / IAM 12695 / TK-6).